Here is a 258-residue protein sequence, read N- to C-terminus: MSMTTETSTNKIQVRDLNFYYGKFHALKNITLDIAANQVTAFIGPSGCGKSTLLRTLNKMYQLYPEQRAEGDILLDGNNILTDKQDIALLRAKVGMVFQKPTPFPMSIYDNIAFGVRLFEKLSRADMDERVQWALTKAALWQETKDKLHQSGYSLSGGQQQRLCIARGIAIRPDVLLLDEPCSALDPISTGRIEELISELKKDYTVVIVTHNMQQAARCSDHTAFMYLGELIEFSDTDTLFTAPRQKQTEDYITGRYG.

The ABC transporter domain occupies 12–253 (IQVRDLNFYY…PRQKQTEDYI (242 aa)). Residue 44–51 (GPSGCGKS) coordinates ATP.

The protein belongs to the ABC transporter superfamily. Phosphate importer (TC 3.A.1.7) family. In terms of assembly, the complex is composed of two ATP-binding proteins (PstB), two transmembrane proteins (PstC and PstA) and a solute-binding protein (PstS).

The protein localises to the cell inner membrane. It carries out the reaction phosphate(out) + ATP + H2O = ADP + 2 phosphate(in) + H(+). Its function is as follows. Part of the ABC transporter complex PstSACB involved in phosphate import. Responsible for energy coupling to the transport system. The sequence is that of Phosphate import ATP-binding protein PstB 2 from Pectobacterium atrosepticum (strain SCRI 1043 / ATCC BAA-672) (Erwinia carotovora subsp. atroseptica).